A 184-amino-acid chain; its full sequence is Trypsin/chymotrypsin inhibitor (184 aa).

Intrachain disulfides connect Cys-39/Cys-84 and Cys-136/Cys-147.

Belongs to the protease inhibitor I3 (leguminous Kunitz-type inhibitor) family. In terms of assembly, homodimer.

Functionally, inhibits trypsin and alpha-chymotrypsin. The chain is Trypsin/chymotrypsin inhibitor from Alocasia macrorrhizos (Giant taro).